Reading from the N-terminus, the 549-residue chain is MSMFCFQCQETAKGTGCTIKGVCGKTADVANLQDLLLYVMKGIAINSLQARELGIVRQDVDKFVMEGLFATITNANFDNARFVALVREGLALRDSLKADIVKAGGVLPANLHDSAIWTADSAEEFEQKAAQVGILATENEDVRSLRELLIYGLKGMAAYAEHAFALGYEDNSIFAFMMKGLAATTDDSLSADQLVALVLEAGKYGVDVMALLDKANTTSYGNPEITKVNIGVRNNPAILISGHDLRDLEDLLKQTEGTGVDVYTHGEMLPAHYYPAFKKYAHFVGNYGNAWWKQDKEFDSFNGAILLTTNCLVPPKDSYKDRLFTTSVVGYEGVKHIPAREAGKVKDFSAVIELAKTLPAPTEIETGEIVGGFAHNQVFAVADKVVEAVKSGAVKRFFVMAGCDGRMKSRDYYTEFAKALPQDTIILTAGCAKYKYNKLALGDIGGIPRVLDAGQCNDSYSLAVIALKLKEVFGLDDVNQLPISYNIAWYEQKAVIVLLALLYLGVKNIHLGPTLPGFLSPNVAKVLVENFGIAGITTVEDDVNLFMGA.

Positions 5, 8, 17, and 23 each coordinate [4Fe-4S] cluster. Positions 243, 267, 311, 403, 431, 456, 491, and 493 each coordinate hybrid [4Fe-2O-2S] cluster. Cysteine persulfide is present on C403.

Belongs to the HCP family. [4Fe-4S] cluster serves as cofactor. The cofactor is hybrid [4Fe-2O-2S] cluster.

The protein resides in the cytoplasm. It carries out the reaction A + NH4(+) + H2O = hydroxylamine + AH2 + H(+). Its function is as follows. Catalyzes the reduction of hydroxylamine to form NH(3) and H(2)O. This chain is Hydroxylamine reductase, found in Desulfitobacterium hafniense (strain Y51).